Reading from the N-terminus, the 231-residue chain is uncharacterized protein (231 aa).

This is an uncharacterized protein from Mycobacterium tuberculosis (strain ATCC 25618 / H37Rv).